The following is a 160-amino-acid chain: SsrA-binding protein (160 aa).

This sequence belongs to the SmpB family.

It localises to the cytoplasm. Its function is as follows. Required for rescue of stalled ribosomes mediated by trans-translation. Binds to transfer-messenger RNA (tmRNA), required for stable association of tmRNA with ribosomes. tmRNA and SmpB together mimic tRNA shape, replacing the anticodon stem-loop with SmpB. tmRNA is encoded by the ssrA gene; the 2 termini fold to resemble tRNA(Ala) and it encodes a 'tag peptide', a short internal open reading frame. During trans-translation Ala-aminoacylated tmRNA acts like a tRNA, entering the A-site of stalled ribosomes, displacing the stalled mRNA. The ribosome then switches to translate the ORF on the tmRNA; the nascent peptide is terminated with the 'tag peptide' encoded by the tmRNA and targeted for degradation. The ribosome is freed to recommence translation, which seems to be the essential function of trans-translation. The sequence is that of SsrA-binding protein from Photorhabdus laumondii subsp. laumondii (strain DSM 15139 / CIP 105565 / TT01) (Photorhabdus luminescens subsp. laumondii).